A 277-amino-acid chain; its full sequence is Urease accessory protein UreD (277 aa).

Belongs to the UreD family. UreD, UreF and UreG form a complex that acts as a GTP-hydrolysis-dependent molecular chaperone, activating the urease apoprotein by helping to assemble the nickel containing metallocenter of UreC. The UreE protein probably delivers the nickel.

It is found in the cytoplasm. Required for maturation of urease via the functional incorporation of the urease nickel metallocenter. In Pseudomonas putida (strain W619), this protein is Urease accessory protein UreD.